The following is a 556-amino-acid chain: MRSDVITKGSKSAPQRSLLSALGLTKEEMERPLVGIVSSQNDIVPGHMNLDKIVEAVKMGVSMAGGTPIVFPAIAVCDGIAMGHEGMKYSLVTRDLIADSTEAMAMAHAFDALVMVPNCDKNVPGLLMAAARVNIPTIFVSGGPMLAGKVDGCKTSLSSMFEAVGAYNAGKITAEKLDEYENNVCPTCGSCSGMYTANSMNCLTEVLGMGLQGNGTIPAVYSERIKLAKHAGMKIMELLEKNIRPRDIMTEDAFMNAMTMDMALGCSTNSMLHLPAIAHEVGFDLNVDIANEISSKTPNLCHLAPAGHTYIEDLNDAGGIYAVMNEINKLGLLKTNLITCTGKTVGENIEGCINKNPEVIRPVKNPYSQTGGIAVLKGNLAPDSCVVKRSAVVPKMLKHEGPAKVFDCEEDALEAINTGKIVAGDVVVIRYEGPKGGPGMREMLNPTSAIAGRGLGSSVALITDGRFSGASRGASIGHVSPEAAVGGNIALVEDGDMIQIDINANTINFLVSDEELARRKANWKPRKPKITTGYLARYAALVTSGNRGAILDIPKF.

Asp78 contacts Mg(2+). A [2Fe-2S] cluster-binding site is contributed by Cys119. Residues Asp120 and Lys121 each coordinate Mg(2+). Residue Lys121 is modified to N6-carboxylysine. Cys191 contacts [2Fe-2S] cluster. Residue Glu442 participates in Mg(2+) binding. Catalysis depends on Ser468, which acts as the Proton acceptor.

The protein belongs to the IlvD/Edd family. Homodimer. [2Fe-2S] cluster is required as a cofactor. Requires Mg(2+) as cofactor.

The catalysed reaction is (2R)-2,3-dihydroxy-3-methylbutanoate = 3-methyl-2-oxobutanoate + H2O. It carries out the reaction (2R,3R)-2,3-dihydroxy-3-methylpentanoate = (S)-3-methyl-2-oxopentanoate + H2O. The protein operates within amino-acid biosynthesis; L-isoleucine biosynthesis; L-isoleucine from 2-oxobutanoate: step 3/4. Its pathway is amino-acid biosynthesis; L-valine biosynthesis; L-valine from pyruvate: step 3/4. Functionally, functions in the biosynthesis of branched-chain amino acids. Catalyzes the dehydration of (2R,3R)-2,3-dihydroxy-3-methylpentanoate (2,3-dihydroxy-3-methylvalerate) into 2-oxo-3-methylpentanoate (2-oxo-3-methylvalerate) and of (2R)-2,3-dihydroxy-3-methylbutanoate (2,3-dihydroxyisovalerate) into 2-oxo-3-methylbutanoate (2-oxoisovalerate), the penultimate precursor to L-isoleucine and L-valine, respectively. The chain is Dihydroxy-acid dehydratase from Clostridium beijerinckii (strain ATCC 51743 / NCIMB 8052) (Clostridium acetobutylicum).